A 171-amino-acid chain; its full sequence is Shikimate kinase (171 aa).

Residue 14–19 participates in ATP binding; sequence GAGKST. S18 provides a ligand contact to Mg(2+). Residues D36, R60, and G82 each coordinate substrate. An ATP-binding site is contributed by R120. A substrate-binding site is contributed by R139. Q156 contributes to the ATP binding site.

It belongs to the shikimate kinase family. In terms of assembly, monomer. The cofactor is Mg(2+).

It localises to the cytoplasm. It carries out the reaction shikimate + ATP = 3-phosphoshikimate + ADP + H(+). The protein operates within metabolic intermediate biosynthesis; chorismate biosynthesis; chorismate from D-erythrose 4-phosphate and phosphoenolpyruvate: step 5/7. Functionally, catalyzes the specific phosphorylation of the 3-hydroxyl group of shikimic acid using ATP as a cosubstrate. This chain is Shikimate kinase, found in Shewanella pealeana (strain ATCC 700345 / ANG-SQ1).